The primary structure comprises 66 residues: Large ribosomal subunit protein bL31 (66 aa).

The Zn(2+) site is built by cysteine 16, cysteine 18, cysteine 36, and cysteine 39.

It belongs to the bacterial ribosomal protein bL31 family. Type A subfamily. As to quaternary structure, part of the 50S ribosomal subunit. The cofactor is Zn(2+).

In terms of biological role, binds the 23S rRNA. The polypeptide is Large ribosomal subunit protein bL31 (Sulfurovum sp. (strain NBC37-1)).